Reading from the N-terminus, the 6306-residue chain is Adhesion G-protein coupled receptor V1 (6306 aa).

An N-terminal signal peptide occupies residues 1–29; sequence MSVFLGPGMPSASLLVNLLSALLILFVFG. Calx-beta domains lie at 30–117, 133–237, 262–362, 388–488, 645–745, 763–861, 876–979, 993–1093, 1108–1208, 1444–1544, 1564–1665, 1710–1809, 1850–1952, 1966–2079, 2107–2206, 2222–2324, 2441–2541, 2584–2676, 2689–2789, 2814–2925, 2947–3048, and 3063–3172; these read ETEI…FHLT, VTVT…IQLK, PVRF…HIML, KPYG…LQIL, PAIA…TLSL, DLII…VVLS, VNIT…VILL, ATLR…IILL, TVII…LKLV, AMPR…FILK, TIQK…RVTL, TGLP…VELL, ILVT…VSVL, TLTV…IELL, QLII…VQLM, VIII…VQLT, TLCL…FLIS, NISP…VSLV, DTVR…QVIL, LTVE…VNLT, TAQV…LILT, and LIIV…CTLF. The Extracellular portion of the chain corresponds to 30-5908; it reads ETEIRFTGQT…TDNLSSYNEA (5879 aa). EAR repeat units lie at residues 3255–3296, 3297–3345, 3348–3393, 3395–3439, 3441–3488, and 3492–3534; these read VFSV…RWQG, IFIP…TFTS, KLFL…RWNG, SFVL…RWSG, GFIN…IWEM, and SFRY…CWNS. Calx-beta domains follow at residues 3525–3625, 3639–3739, 3775–3875, 3899–4006, 4020–4123, 4139–4239, 4255–4354, 4387–4489, 4512–4612, 4634–4734, 4992–5095, 5288–5332, and 5368–5468; these read DMSA…KVQL, SVTI…IVTL, GLVG…VTIT, AEIM…ISLI, VTVV…IQLI, IIIR…EFQL, ANIT…LTIT, RIII…ILLT, SPFG…IIKL, EFGD…VIQL, SGFI…INLT, AVEE…YVFL, and IGFS…FVEL. A GAIN-B domain is found at 5747–5903; sequence SILALHWYPQ…AVYARTDNLS (157 aa). Disulfide bonds link Cys5856/Cys5885 and Cys5873/Cys5887. The interval 5856 to 5903 is GPS; it reads CLLWNQAAASWLSDSQFCKVVEETADYVECACSHMSVYAVYARTDNLS. The chain crosses the membrane as a helical span at residues 5909-5929; sequence FFTSGFICISGLCLAVLSHIF. At 5930–5939 the chain is on the cytoplasmic side; that stretch reads CARYSMFAAK. A helical membrane pass occupies residues 5940–5960; the sequence is LLTHMMAASLGTQILFLASAY. Residues 5961–5979 lie on the Extracellular side of the membrane; that stretch reads ASPQLAEESCSAMAAVTHY. A helical transmembrane segment spans residues 5980–6000; it reads LYLCQFSWMLIQSVNFWYVLV. Residues 6001–6010 lie on the Cytoplasmic side of the membrane; that stretch reads MNDEHTERRY. The helical transmembrane segment at 6011-6031 threads the bilayer; it reads LLFFLLSWGLPAFVVILLIVI. At 6032–6059 the chain is on the extracellular side; that stretch reads LKGIYHQSMSQIYGLIHGDLCFIPNVYA. The chain crosses the membrane as a helical span at residues 6060–6080; sequence ALFTAALVPLTCLVVVFVVFI. Residues 6081–6104 are Cytoplasmic-facing; sequence HAYQVKPQWKAYDDVFRGRTNAAE. The chain crosses the membrane as a helical span at residues 6105-6125; that stretch reads IPLILYLFALISVTWLWGGLH. Residues 6126–6133 are Extracellular-facing; it reads MAYRHFWM. A helical transmembrane segment spans residues 6134 to 6154; it reads LVLFVIFNSLQGLYVFMVYFI. Topologically, residues 6155-6306 are cytoplasmic; that stretch reads LHNQMCCPMK…RRIPIADTHL (152 aa). The interval 6216-6248 is disordered; the sequence is ASFQQGSQASPDLKPSPQNGATFPSSGGYGQGS. Over residues 6217–6240 the composition is skewed to polar residues; that stretch reads SFQQGSQASPDLKPSPQNGATFPS.

This sequence belongs to the G-protein coupled receptor 2 family. Adhesion G-protein coupled receptor (ADGR) subfamily. Forms a heterodimer, consisting of a large extracellular region (alpha subunit) non-covalently linked to a seven-transmembrane moiety (beta subunit). Component of USH2 complex, composed of ADGRV1, PDZD7, USH2A and WHRN. Interacts with USH2A and WHRN. Interacts (via the cytoplasmic region) with PDZD7. Interacts (via the cytoplasmic region) with MYO7A (via MyTH4-FERM domains). In terms of processing, autoproteolytically cleaved into 2 subunits, an extracellular alpha subunit and a seven-transmembrane subunit. Expressed at low levels in adult tissues.

It is found in the cell membrane. It localises to the cell projection. Its subcellular location is the stereocilium membrane. The protein localises to the photoreceptor inner segment. G-protein coupled receptor which has an essential role in the development of hearing and vision. Couples to G-alpha(i)-proteins, GNAI1/2/3, G-alpha(q)-proteins, GNAQ, as well as G-alpha(s)-proteins, GNAS, inhibiting adenylate cyclase (AC) activity and cAMP production. Required for the hair bundle ankle formation, which connects growing stereocilia in developing cochlear hair cells of the inner ear. In response to extracellular calcium, activates kinases PKA and PKC to regulate myelination by inhibiting the ubiquitination of MAG, thus enhancing the stability of this protein in myelin-forming cells of the auditory pathway. In retina photoreceptors, the USH2 complex is required for the maintenance of periciliary membrane complex that seems to play a role in regulating intracellular protein transport. Involved in the regulation of bone metabolism. Functionally, cleaved ADGRV1 beta-subunit couples with G-alpha(i)-proteins, GNAI1/2/3, and constitutively inhibits adenylate cyclase (AC) activity with a stronger effect than full ADGRV1. This is Adhesion G-protein coupled receptor V1 from Homo sapiens (Human).